The following is a 124-amino-acid chain: Histone H2A, embryonic (124 aa).

A compositionally biased stretch (basic residues) spans 1–18 (MSGRGKSGKARTKAKTRS). The disordered stretch occupies residues 1–21 (MSGRGKSGKARTKAKTRSSRA). Serine 2 carries the post-translational modification N-acetylserine. Serine 2 is modified (phosphoserine). An N5-methylglutamine modification is found at glutamine 104. Lysine 119 is covalently cross-linked (Glycyl lysine isopeptide (Lys-Gly) (interchain with G-Cter in ubiquitin)).

The protein belongs to the histone H2A family. In terms of assembly, the nucleosome is a histone octamer containing two molecules each of H2A, H2B, H3 and H4 assembled in one H3-H4 heterotetramer and two H2A-H2B heterodimers. The octamer wraps approximately 147 bp of DNA. Monoubiquitination of Lys-119 gives a specific tag for epigenetic transcriptional repression. In terms of processing, phosphorylation of Ser-2 directly represses transcription.

It localises to the nucleus. It is found in the chromosome. Its function is as follows. Core component of nucleosome. Nucleosomes wrap and compact DNA into chromatin, limiting DNA accessibility to the cellular machineries which require DNA as a template. Histones thereby play a central role in transcription regulation, DNA repair, DNA replication and chromosomal stability. DNA accessibility is regulated via a complex set of post-translational modifications of histones, also called histone code, and nucleosome remodeling. In Psammechinus miliaris (Green sea urchin), this protein is Histone H2A, embryonic.